Consider the following 361-residue polypeptide: S-adenosylmethionine:tRNA ribosyltransferase-isomerase (361 aa).

Belongs to the QueA family. In terms of assembly, monomer.

Its subcellular location is the cytoplasm. The enzyme catalyses 7-aminomethyl-7-carbaguanosine(34) in tRNA + S-adenosyl-L-methionine = epoxyqueuosine(34) in tRNA + adenine + L-methionine + 2 H(+). It participates in tRNA modification; tRNA-queuosine biosynthesis. Its function is as follows. Transfers and isomerizes the ribose moiety from AdoMet to the 7-aminomethyl group of 7-deazaguanine (preQ1-tRNA) to give epoxyqueuosine (oQ-tRNA). This Rhizobium johnstonii (strain DSM 114642 / LMG 32736 / 3841) (Rhizobium leguminosarum bv. viciae) protein is S-adenosylmethionine:tRNA ribosyltransferase-isomerase.